The chain runs to 344 residues: Nicotinate-nucleotide--dimethylbenzimidazole phosphoribosyltransferase (344 aa).

E310 (proton acceptor) is an active-site residue.

The protein belongs to the CobT family.

The catalysed reaction is 5,6-dimethylbenzimidazole + nicotinate beta-D-ribonucleotide = alpha-ribazole 5'-phosphate + nicotinate + H(+). It functions in the pathway nucleoside biosynthesis; alpha-ribazole biosynthesis; alpha-ribazole from 5,6-dimethylbenzimidazole: step 1/2. Functionally, catalyzes the synthesis of alpha-ribazole-5'-phosphate from nicotinate mononucleotide (NAMN) and 5,6-dimethylbenzimidazole (DMB). The polypeptide is Nicotinate-nucleotide--dimethylbenzimidazole phosphoribosyltransferase (Chromobacterium violaceum (strain ATCC 12472 / DSM 30191 / JCM 1249 / CCUG 213 / NBRC 12614 / NCIMB 9131 / NCTC 9757 / MK)).